Reading from the N-terminus, the 225-residue chain is Urease accessory protein UreF (225 aa).

It belongs to the UreF family. As to quaternary structure, ureD, UreF and UreG form a complex that acts as a GTP-hydrolysis-dependent molecular chaperone, activating the urease apoprotein by helping to assemble the nickel containing metallocenter of UreC. The UreE protein probably delivers the nickel.

Its subcellular location is the cytoplasm. In terms of biological role, required for maturation of urease via the functional incorporation of the urease nickel metallocenter. This is Urease accessory protein UreF from Arthrobacter sp. (strain FB24).